Consider the following 311-residue polypeptide: Pyrimidine-specific ribonucleoside hydrolase RihA (311 aa).

The active site involves histidine 240.

Belongs to the IUNH family. RihA subfamily.

Hydrolyzes with equal efficiency cytidine or uridine to ribose and cytosine or uracil, respectively. The chain is Pyrimidine-specific ribonucleoside hydrolase RihA from Escherichia coli (strain K12 / MC4100 / BW2952).